A 552-amino-acid chain; its full sequence is Probable acyl-activating enzyme 5, peroxisomal (552 aa).

Residues 550-552 (SRM) carry the Microbody targeting signal motif.

It belongs to the ATP-dependent AMP-binding enzyme family. In terms of tissue distribution, expressed in roots, stems and developing seeds.

Its subcellular location is the peroxisome. May act as an acid--thiol ligase that activates carboxylic acids by forming acyl-CoAs. The sequence is that of Probable acyl-activating enzyme 5, peroxisomal (AAE5) from Arabidopsis thaliana (Mouse-ear cress).